A 229-amino-acid polypeptide reads, in one-letter code: Large ribosomal subunit protein uL1 (229 aa).

Belongs to the universal ribosomal protein uL1 family. In terms of assembly, part of the 50S ribosomal subunit.

Functionally, binds directly to 23S rRNA. The L1 stalk is quite mobile in the ribosome, and is involved in E site tRNA release. Its function is as follows. Protein L1 is also a translational repressor protein, it controls the translation of the L11 operon by binding to its mRNA. The chain is Large ribosomal subunit protein uL1 from Thermus thermophilus (strain ATCC BAA-163 / DSM 7039 / HB27).